The chain runs to 1122 residues: Histidine kinase CKI1 (1122 aa).

Over Met-1–Arg-12 the chain is Cytoplasmic. A helical membrane pass occupies residues Pro-13–Ser-33. The Extracellular segment spans residues Asn-34–Gln-345. A helical membrane pass occupies residues Leu-346–Met-366. The Cytoplasmic segment spans residues Gln-367 to His-1122. Residues Asn-402–Thr-671 enclose the Histidine kinase domain. Phosphohistidine; by autocatalysis is present on His-405. Residues Ala-918–Glu-928 show a composition bias toward basic and acidic residues. The segment at Ala-918–Glu-981 is disordered. A Response regulatory domain is found at Arg-987–Lys-1120. Residue Asp-1050 is modified to 4-aspartylphosphate.

In terms of assembly, homodimer. Interacts with AHP2 and AHP3. As to expression, expressed in vascular tissues of inflorescence stems and floral organs, especially in procambium cells, and in siliques.

The protein resides in the cell membrane. The catalysed reaction is ATP + protein L-histidine = ADP + protein N-phospho-L-histidine.. In terms of biological role, essential protein. Functions as a histidine kinase and transmits the stress signal to a downstream MAPK cascade. This protein undergoes an ATP-dependent autophosphorylation at a conserved histidine residue in the kinase core, and a phosphoryl group is then transferred to a conserved aspartate residue in the receiver domain. Required for the development of megagametophyte in female gametophyte (embryo sac) independently of cytokinin. Contributes to vascular bundle formation and secondary growth in a cytokinin-independent manner, probably by promoting the maintenance of mitotic activity and/or identity of procambial cells. Seems to influence and promote the cytokinin signaling pathway. The protein is Histidine kinase CKI1 (CKI1) of Arabidopsis thaliana (Mouse-ear cress).